The sequence spans 457 residues: Argininosuccinate lyase (457 aa).

Belongs to the lyase 1 family. Argininosuccinate lyase subfamily.

Its subcellular location is the cytoplasm. It catalyses the reaction 2-(N(omega)-L-arginino)succinate = fumarate + L-arginine. It functions in the pathway amino-acid biosynthesis; L-arginine biosynthesis; L-arginine from L-ornithine and carbamoyl phosphate: step 3/3. The polypeptide is Argininosuccinate lyase (Shigella dysenteriae serotype 1 (strain Sd197)).